Reading from the N-terminus, the 208-residue chain is Ribonuclease HII (208 aa).

The RNase H type-2 domain maps to 5-198 (PLIAGVDEVG…CQPRLEHDCR (194 aa)). A divalent metal cation is bound by residues aspartate 11, glutamate 12, and aspartate 106.

Belongs to the RNase HII family. Requires Mn(2+) as cofactor. The cofactor is Mg(2+).

It localises to the cytoplasm. It catalyses the reaction Endonucleolytic cleavage to 5'-phosphomonoester.. Functionally, endonuclease that specifically degrades the RNA of RNA-DNA hybrids. The chain is Ribonuclease HII from Microcystis aeruginosa (strain NIES-843 / IAM M-2473).